The chain runs to 435 residues: Trigger factor (435 aa).

Positions 163–248 constitute a PPIase FKBP-type domain; sequence GDTVTIDFDG…IHEIKTKELP (86 aa).

The protein belongs to the FKBP-type PPIase family. Tig subfamily.

The protein resides in the cytoplasm. It carries out the reaction [protein]-peptidylproline (omega=180) = [protein]-peptidylproline (omega=0). In terms of biological role, involved in protein export. Acts as a chaperone by maintaining the newly synthesized protein in an open conformation. Functions as a peptidyl-prolyl cis-trans isomerase. In Pediococcus pentosaceus (strain ATCC 25745 / CCUG 21536 / LMG 10740 / 183-1w), this protein is Trigger factor.